A 302-amino-acid chain; its full sequence is 1,2-dihydroxynaphthalene dioxygenase (302 aa).

VOC domains are found at residues 9–124 (ELGY…IFWG) and 149–270 (GLGH…PGWR). A Fe cation-binding site is contributed by His-152. Residues His-152, 199–200 (DH), His-215, and Tyr-256 each bind substrate. His-215 serves as a coordination point for Fe cation. Fe cation is bound at residue Glu-266.

The protein belongs to the extradiol ring-cleavage dioxygenase family. Requires Fe(2+) as cofactor.

It carries out the reaction naphthalene-1,2-diol + O2 = 2-hydroxychromene-2-carboxylate + H(+). The protein operates within aromatic compound metabolism; naphthalene degradation. Functionally, involved in the naphthalene catabolic pathway. Catalyzes the meta-cleavage of 1,2-dihydroxynaphthalene (1,2-DHN) to yield 2-hydroxychromene-2-carboxylic acid. This Pseudomonas putida (Arthrobacter siderocapsulatus) protein is 1,2-dihydroxynaphthalene dioxygenase (nahC).